The following is a 64-amino-acid chain: Small hydrophobic protein (64 aa).

The Intravirion portion of the chain corresponds to Met-1–Leu-20. Positions Ile-6–Trp-15 are interaction with host BCAP31. The chain crosses the membrane as a helical; Signal-anchor for type II membrane protein span at residues Ile-21 to Leu-44. An interaction with small-molecule inhibitor region spans residues Ile-38–Lys-43. Residues Cys-45 to Thr-64 lie on the Virion surface side of the membrane. A glycan (N-linked (GlcNAc...) asparagine; by host) is linked at Asn-52.

This sequence belongs to the orthopneumovirus small hydrophobic protein family. In terms of assembly, homopentamer forming a funnel-like pore. Interacts with glycoprotein G; this interaction occurs on the surface of virion particles and infected cells. Interacts with host BCAP31 (via C-terminus); this interaction is direct. In terms of processing, four species of SH have been detected in infected cell cytoplasm: a 7.5 kDa non-glycosylated form (SH0), a 13-15 kDa form that contains one or two N-linked carbohydrate side chains of the high-mannose type (SHg), a 21-30 kDa polylactosaminoglycan-modified form of the protein (SHp), and the isoform generated by alternative translational initiation. Of these different forms, SH0 is by far the most abundant protein detected during virus infection. Post-translationally, tyrosine phosphorylated.

The protein localises to the virion membrane. It localises to the host cell membrane. It is found in the host Golgi apparatus membrane. Its subcellular location is the host endoplasmic reticulum membrane. With respect to regulation, channel activity is inhibited by copper. Also inhibited by small-molecule pyronin B. In terms of biological role, viroporin that forms a homopentameric ion channel displaying low ion selectivity. May play a role in virus morphogenesis and pathogenicity at various stages of the viral life cycle. Accumulates at the membrane of the Golgi apparatus in infected cells and may facilitate virus release by modifying the secretory pathway. May enhance host membrane permeability and disrupt cellular ion homeostasis, which can be sensed as damage-associated molecular patterns/danger signals, triggering NLRP3 inflammasome activation and inflammatory immune response. Also inhibits host TNFA-mediated signaling pathway and may delay apoptosis, allowing time for the virus to replicate. This chain is Small hydrophobic protein, found in Homo sapiens (Human).